The following is a 330-amino-acid chain: MKNIAIIGASGYTGAQISSLINAESTMSIQGLYVSENSLDKGKALSDLYPAYSHIDLCLTPLTDDAKQTIVATADAVVLATDHGVSLHLAAWFYQQGLAVFDLSGAYRFSDVAQYPKWYGFTHEYSQVLADAVYGLAEWNAPQIATSKMIAVPGCYPTASLIALKPVAHLLTDILPVINAVSGVTGAGRKAQLHTSFCEVSLTPYGVLGHRHQPEIATQLGQEVIFTPHLGNFKRGILATITVQLAAGTTASDIEKAYQCYDSAELITVKQNQFPKVDDVVQTANCHLGWKFDEQSGYLVIASAIDNLMKGAASQALQCIKIHFNASVNH.

The active site involves cysteine 155.

This sequence belongs to the NAGSA dehydrogenase family. Type 1 subfamily.

The protein localises to the cytoplasm. The enzyme catalyses N-acetyl-L-glutamate 5-semialdehyde + phosphate + NADP(+) = N-acetyl-L-glutamyl 5-phosphate + NADPH + H(+). Its pathway is amino-acid biosynthesis; L-arginine biosynthesis; N(2)-acetyl-L-ornithine from L-glutamate: step 3/4. In terms of biological role, catalyzes the NADPH-dependent reduction of N-acetyl-5-glutamyl phosphate to yield N-acetyl-L-glutamate 5-semialdehyde. In Shewanella halifaxensis (strain HAW-EB4), this protein is N-acetyl-gamma-glutamyl-phosphate reductase.